Here is a 159-residue protein sequence, read N- to C-terminus: Large ribosomal subunit protein eL24 (159 aa).

Residues 118–159 form a disordered region; it reads ANKAVRAAKAAANKEKKASQPKTQQKTAKNVKTAAPRVGGKR. The segment covering 137–147 has biased composition (polar residues); it reads QPKTQQKTAKN.

It belongs to the eukaryotic ribosomal protein eL24 family.

In Caenorhabditis elegans, this protein is Large ribosomal subunit protein eL24.